A 492-amino-acid polypeptide reads, in one-letter code: Probable cytochrome P450 516B1 (492 aa).

A helical transmembrane segment spans residues 1-17 (MYLILSLIIFLAYVAFH). Residue cysteine 438 coordinates heme.

Belongs to the cytochrome P450 family. Requires heme as cofactor.

The protein localises to the membrane. The sequence is that of Probable cytochrome P450 516B1 (cyp516B1) from Dictyostelium discoideum (Social amoeba).